The chain runs to 104 residues: L-rhamnose mutarotase (104 aa).

Substrate is bound at residue tyrosine 18. Histidine 22 serves as the catalytic Proton donor. Residues tyrosine 41 and 76–77 (WW) each bind substrate.

The protein belongs to the rhamnose mutarotase family. Homodimer.

It localises to the cytoplasm. The catalysed reaction is alpha-L-rhamnose = beta-L-rhamnose. It functions in the pathway carbohydrate metabolism; L-rhamnose metabolism. Its function is as follows. Involved in the anomeric conversion of L-rhamnose. This Listeria monocytogenes serovar 1/2a (strain ATCC BAA-679 / EGD-e) protein is L-rhamnose mutarotase.